A 502-amino-acid chain; its full sequence is Serine/threonine-protein kinase SKS1 (502 aa).

Residues 10 to 338 (FRITAQIGSG…SEVSSLTSFT (329 aa)) enclose the Protein kinase domain. ATP is bound by residues 16 to 24 (IGSGAYGLV) and lysine 39. Aspartate 186 serves as the catalytic Proton acceptor. 2 stretches are compositionally biased toward low complexity: residues 376-391 (QEQQQQQQQQQQQVQE) and 399-410 (EQIQNQEQAQQQ). The interval 376 to 439 (QEQQQQQQQQ…GSMEKYEYTN (64 aa)) is disordered. Acidic residues predominate over residues 411–420 (QEEEDAEPES).

It belongs to the protein kinase superfamily. Ser/Thr protein kinase family.

The catalysed reaction is L-seryl-[protein] + ATP = O-phospho-L-seryl-[protein] + ADP + H(+). It catalyses the reaction L-threonyl-[protein] + ATP = O-phospho-L-threonyl-[protein] + ADP + H(+). Its function is as follows. May have a role in glucose regulation. This chain is Serine/threonine-protein kinase SKS1 (SKS1), found in Saccharomyces cerevisiae (strain ATCC 204508 / S288c) (Baker's yeast).